A 263-amino-acid chain; its full sequence is MKNAFKDTLKAGRPQIGLWLGLANSYSAELLAGAGFDWLLIDGEHAPNNVQTVLTQLQAIAPYPSQPVVRPSWNDPVQIKQLLDVGAQTLLIPMVQNADEARNAVAATRYPPAGIRGVGSALARASRWNRIPDYLHQANDAMCVLVQIETREAMSNLASILDVDGIDGVFIGPADLSADMGFAGNPQHPEVQAAIENAIVQIRAAGKAPGILMANEPLAKRYLELGALFVAVGVDTTLLARGAEALAARFGVEKNLSGASGVY.

His45 acts as the Proton acceptor in catalysis. Residue Gln147 coordinates substrate. Glu149 contacts a divalent metal cation. Positions 174 and 175 each coordinate substrate. Asp175 lines the a divalent metal cation pocket.

Belongs to the HpcH/HpaI aldolase family. In terms of assembly, homohexamer; trimer of dimers. It depends on a divalent metal cation as a cofactor.

It carries out the reaction 4-hydroxy-2-oxoheptanedioate = succinate semialdehyde + pyruvate. Its pathway is aromatic compound metabolism; 4-hydroxyphenylacetate degradation; pyruvate and succinate semialdehyde from 4-hydroxyphenylacetate: step 7/7. Catalyzes the reversible retro-aldol cleavage of 4-hydroxy-2-ketoheptane-1,7-dioate (HKHD) to pyruvate and succinic semialdehyde. The chain is 4-hydroxy-2-oxo-heptane-1,7-dioate aldolase from Salmonella choleraesuis (strain SC-B67).